A 101-amino-acid chain; its full sequence is RNA-binding protein Hfq (101 aa).

The region spanning 9–68 is the Sm domain; that stretch reads DPFLNALRRERVPVSIYLVNGIKLQGQVESFDQFVILLKNTVSQMVYKHAISTVVPSRPV. A disordered region spans residues 63–101; sequence VPSRPVSHHSNTPSGSTNNYHGSNPSAPQQPQQDSDDAE. Positions 70–86 are enriched in polar residues; the sequence is HHSNTPSGSTNNYHGSN.

Belongs to the Hfq family. Homohexamer.

RNA chaperone that binds small regulatory RNA (sRNAs) and mRNAs to facilitate mRNA translational regulation in response to envelope stress, environmental stress and changes in metabolite concentrations. Also binds with high specificity to tRNAs. This is RNA-binding protein Hfq from Yersinia pseudotuberculosis serotype O:1b (strain IP 31758).